Consider the following 129-residue polypeptide: Small ribosomal subunit protein uS11 (129 aa).

Belongs to the universal ribosomal protein uS11 family. As to quaternary structure, part of the 30S ribosomal subunit. Interacts with proteins S7 and S18. Binds to IF-3.

Its function is as follows. Located on the platform of the 30S subunit, it bridges several disparate RNA helices of the 16S rRNA. Forms part of the Shine-Dalgarno cleft in the 70S ribosome. This chain is Small ribosomal subunit protein uS11, found in Serratia proteamaculans (strain 568).